A 965-amino-acid polypeptide reads, in one-letter code: Isoleucine--tRNA ligase (965 aa).

The 'HIGH' region motif lies at 68-78; the sequence is PYANGSLHMGH. Residue glutamate 582 coordinates L-isoleucyl-5'-AMP. A 'KMSKS' region motif is present at residues 623–627; it reads KMSKS. Lysine 626 lines the ATP pocket. Positions 936, 939, 956, and 959 each coordinate Zn(2+).

Belongs to the class-I aminoacyl-tRNA synthetase family. IleS type 1 subfamily. As to quaternary structure, monomer. Zn(2+) serves as cofactor.

It localises to the cytoplasm. It catalyses the reaction tRNA(Ile) + L-isoleucine + ATP = L-isoleucyl-tRNA(Ile) + AMP + diphosphate. Functionally, catalyzes the attachment of isoleucine to tRNA(Ile). As IleRS can inadvertently accommodate and process structurally similar amino acids such as valine, to avoid such errors it has two additional distinct tRNA(Ile)-dependent editing activities. One activity is designated as 'pretransfer' editing and involves the hydrolysis of activated Val-AMP. The other activity is designated 'posttransfer' editing and involves deacylation of mischarged Val-tRNA(Ile). This is Isoleucine--tRNA ligase from Prochlorococcus marinus (strain MIT 9515).